The chain runs to 103 residues: Large ribosomal subunit protein uL24 (103 aa).

Belongs to the universal ribosomal protein uL24 family. Part of the 50S ribosomal subunit.

Functionally, one of two assembly initiator proteins, it binds directly to the 5'-end of the 23S rRNA, where it nucleates assembly of the 50S subunit. In terms of biological role, one of the proteins that surrounds the polypeptide exit tunnel on the outside of the subunit. In Brucella ovis (strain ATCC 25840 / 63/290 / NCTC 10512), this protein is Large ribosomal subunit protein uL24.